Reading from the N-terminus, the 246-residue chain is Enolase-phosphatase E1 (246 aa).

Residues D15 and E17 each contribute to the Mg(2+) site. Substrate contacts are provided by residues 134–135 (SS) and K174. A Mg(2+)-binding site is contributed by D201.

Belongs to the HAD-like hydrolase superfamily. MasA/MtnC family. As to quaternary structure, monomer. Mg(2+) serves as cofactor.

It is found in the cytoplasm. Its subcellular location is the nucleus. It catalyses the reaction 5-methylsulfanyl-2,3-dioxopentyl phosphate + H2O = 1,2-dihydroxy-5-(methylsulfanyl)pent-1-en-3-one + phosphate. The protein operates within amino-acid biosynthesis; L-methionine biosynthesis via salvage pathway; L-methionine from S-methyl-5-thio-alpha-D-ribose 1-phosphate: step 3/6. Its pathway is amino-acid biosynthesis; L-methionine biosynthesis via salvage pathway; L-methionine from S-methyl-5-thio-alpha-D-ribose 1-phosphate: step 4/6. Functionally, bifunctional enzyme that catalyzes the enolization of 2,3-diketo-5-methylthiopentyl-1-phosphate (DK-MTP-1-P) into the intermediate 2-hydroxy-3-keto-5-methylthiopentenyl-1-phosphate (HK-MTPenyl-1-P), which is then dephosphorylated to form the acireductone 1,2-dihydroxy-3-keto-5-methylthiopentene (DHK-MTPene). The sequence is that of Enolase-phosphatase E1 from Debaryomyces hansenii (strain ATCC 36239 / CBS 767 / BCRC 21394 / JCM 1990 / NBRC 0083 / IGC 2968) (Yeast).